Consider the following 560-residue polypeptide: Cilia- and flagella-associated protein 184 (560 aa).

Residues 1–12 show a composition bias toward basic and acidic residues; sequence MEGGSEHTKDPG. Residues 1–209 form a disordered region; sequence MEGGSEHTKD…QEEGKPLGGR (209 aa). 2 stretches are compositionally biased toward acidic residues: residues 41–61 and 101–110; these read GELE…EEEA and EPEEPAEAGA. Composition is skewed to basic and acidic residues over residues 127 to 144 and 179 to 209; these read AEAR…KEVR and ETRR…LGGR. Coiled-coil stretches lie at residues 357–481 and 510–536; these read QAAL…QGRD and DSLL…LKRH.

It belongs to the CFAP184 family. In terms of assembly, forms a complex with CFAP263; the interaction is required for functional activity in cilia.

It localises to the cell projection. Its subcellular location is the cilium. The protein localises to the cytoplasm. It is found in the cytoskeleton. The protein resides in the microtubule organizing center. It localises to the centrosome. In complex with CFAP263, acts as a regulator of ciliary beating that connects radial spoke 3 (RS3) to the inner dynein arm (IDA) and the nexin-dynein regulatory complex (N-DRC). The complex is positioned parallel to N-DRC and forms a connection between the arch at the base of RS3, the IDA tail and N-DRC. The sequence is that of Cilia- and flagella-associated protein 184 (CFAP184) from Macaca fascicularis (Crab-eating macaque).